Consider the following 334-residue polypeptide: Holliday junction branch migration complex subunit RuvB (334 aa).

The segment at 4 to 186 (ADRLIAPENP…FGITQRLEYY (183 aa)) is large ATPase domain (RuvB-L). Residues isoleucine 25, arginine 26, glycine 67, lysine 70, threonine 71, threonine 72, 133 to 135 (EDY), arginine 176, tyrosine 186, and arginine 223 contribute to the ATP site. Threonine 71 contributes to the Mg(2+) binding site. The small ATPAse domain (RuvB-S) stretch occupies residues 187–257 (KVQDLQNIVQ…VADKALNMLD (71 aa)). Residues 260 to 334 (AQGFDYMDRK…RAYLHFGIEK (75 aa)) form a head domain (RuvB-H) region. Residues arginine 315 and arginine 320 each contribute to the DNA site.

It belongs to the RuvB family. In terms of assembly, homohexamer. Forms an RuvA(8)-RuvB(12)-Holliday junction (HJ) complex. HJ DNA is sandwiched between 2 RuvA tetramers; dsDNA enters through RuvA and exits via RuvB. An RuvB hexamer assembles on each DNA strand where it exits the tetramer. Each RuvB hexamer is contacted by two RuvA subunits (via domain III) on 2 adjacent RuvB subunits; this complex drives branch migration. In the full resolvosome a probable DNA-RuvA(4)-RuvB(12)-RuvC(2) complex forms which resolves the HJ.

The protein localises to the cytoplasm. The enzyme catalyses ATP + H2O = ADP + phosphate + H(+). In terms of biological role, the RuvA-RuvB-RuvC complex processes Holliday junction (HJ) DNA during genetic recombination and DNA repair, while the RuvA-RuvB complex plays an important role in the rescue of blocked DNA replication forks via replication fork reversal (RFR). RuvA specifically binds to HJ cruciform DNA, conferring on it an open structure. The RuvB hexamer acts as an ATP-dependent pump, pulling dsDNA into and through the RuvAB complex. RuvB forms 2 homohexamers on either side of HJ DNA bound by 1 or 2 RuvA tetramers; 4 subunits per hexamer contact DNA at a time. Coordinated motions by a converter formed by DNA-disengaged RuvB subunits stimulates ATP hydrolysis and nucleotide exchange. Immobilization of the converter enables RuvB to convert the ATP-contained energy into a lever motion, pulling 2 nucleotides of DNA out of the RuvA tetramer per ATP hydrolyzed, thus driving DNA branch migration. The RuvB motors rotate together with the DNA substrate, which together with the progressing nucleotide cycle form the mechanistic basis for DNA recombination by continuous HJ branch migration. Branch migration allows RuvC to scan DNA until it finds its consensus sequence, where it cleaves and resolves cruciform DNA. The chain is Holliday junction branch migration complex subunit RuvB from Vibrio parahaemolyticus serotype O3:K6 (strain RIMD 2210633).